A 369-amino-acid polypeptide reads, in one-letter code: Putative 2-aminoethylphosphonate import ATP-binding protein PhnT (369 aa).

Residues 19 to 250 (IVLDSLRVAY…PPNRFAAEFL (232 aa)) form the ABC transporter domain. ATP is bound at residue 51–58 (GPSGSGKT).

It belongs to the ABC transporter superfamily. 2-aminoethylphosphonate importer (TC 3.A.1.11.5) family.

Its subcellular location is the cell inner membrane. Its function is as follows. Probably part of the PhnSTUV complex (TC 3.A.1.11.5) involved in 2-aminoethylphosphonate import. Probably responsible for energy coupling to the transport system. In Salmonella paratyphi A (strain ATCC 9150 / SARB42), this protein is Putative 2-aminoethylphosphonate import ATP-binding protein PhnT (phnT).